Here is a 308-residue protein sequence, read N- to C-terminus: Cyclin-D4-1 (308 aa).

It belongs to the cyclin family. Cyclin D subfamily. Interacts with CDKA-1, CDKB2-1, KRP4/ICK7, KRP5/ICK3, KRP6/ICK4 and KRP7/ICK5. In terms of tissue distribution, expressed in shoot apical meristem, leaf primordia vascular tissues and tapetum of anthers.

In terms of biological role, may activate cell cycle in the root apical meristem (RAM) and promote embryonic root (radicle) protrusion. The protein is Cyclin-D4-1 (CYCD4-1) of Arabidopsis thaliana (Mouse-ear cress).